We begin with the raw amino-acid sequence, 153 residues long: SsrA-binding protein (153 aa).

Belongs to the SmpB family.

The protein resides in the cytoplasm. Its function is as follows. Required for rescue of stalled ribosomes mediated by trans-translation. Binds to transfer-messenger RNA (tmRNA), required for stable association of tmRNA with ribosomes. tmRNA and SmpB together mimic tRNA shape, replacing the anticodon stem-loop with SmpB. tmRNA is encoded by the ssrA gene; the 2 termini fold to resemble tRNA(Ala) and it encodes a 'tag peptide', a short internal open reading frame. During trans-translation Ala-aminoacylated tmRNA acts like a tRNA, entering the A-site of stalled ribosomes, displacing the stalled mRNA. The ribosome then switches to translate the ORF on the tmRNA; the nascent peptide is terminated with the 'tag peptide' encoded by the tmRNA and targeted for degradation. The ribosome is freed to recommence translation, which seems to be the essential function of trans-translation. This is SsrA-binding protein from Macrococcus caseolyticus (strain JCSC5402) (Macrococcoides caseolyticum).